The primary structure comprises 314 residues: Pyridoxal 5'-phosphate synthase-like subunit PDX1.2 (314 aa).

Residue alanine 2 is modified to N-acetylalanine.

This sequence belongs to the PdxS/SNZ family. In terms of assembly, homodimer or heterodimer with PDX1.1 or PDX1.3. No interaction with PDX2. In terms of tissue distribution, expressed in callus tissues, flowers and roots. Weakly expressed in leaves and stems.

Its subcellular location is the cytoplasm. Functionally, the protein has no function in the formation of pyridoxal 5'-phosphate. The polypeptide is Pyridoxal 5'-phosphate synthase-like subunit PDX1.2 (PDX12) (Arabidopsis thaliana (Mouse-ear cress)).